The following is a 764-amino-acid chain: Chloride anion exchanger (764 aa).

The Cytoplasmic segment spans residues methionine 1–aspartate 76. A helical membrane pass occupies residues isoleucine 77–leucine 97. The Extracellular segment spans residues valine 98 to aspartate 99. The helical transmembrane segment at isoleucine 100–glycine 120 threads the bilayer. The Cytoplasmic segment spans residues threonine 121–histidine 124. A helical transmembrane segment spans residues isoleucine 125–valine 145. Over serine 146–arginine 175 the chain is Extracellular. Asparagine 153, asparagine 161, and asparagine 165 each carry an N-linked (GlcNAc...) asparagine glycan. Residues valine 176–leucine 196 traverse the membrane as a helical segment. Residue arginine 197 is a topological domain, cytoplasmic. Residues isoleucine 198–alanine 218 traverse the membrane as a helical segment. The Extracellular portion of the chain corresponds to valine 219 to threonine 257. A helical membrane pass occupies residues asparagine 258–isoleucine 278. The Cytoplasmic segment spans residues asparagine 279–aspartate 342. Residues cysteine 343–leucine 363 form a helical membrane-spanning segment. The Extracellular portion of the chain corresponds to lysine 364–glutamate 374. A helical membrane pass occupies residues leucine 375 to threonine 395. The Cytoplasmic segment spans residues alanine 396–glutamine 411. A helical membrane pass occupies residues isoleucine 412–leucine 432. At alanine 433–cysteine 469 the chain is on the extracellular side. The helical transmembrane segment at leucine 470–alanine 490 threads the bilayer. At serine 491–aspartate 701 the chain is on the cytoplasmic side. The region spanning aspartate 525–isoleucine 720 is the STAS domain. The short motif at glutamate 761–phenylalanine 764 is the PDZ-binding element.

It belongs to the SLC26A/SulP transporter (TC 2.A.53) family. As to quaternary structure, interacts with CFTR, SLC26A6 and NHERF1. Interacts with PDZK1. Interacts (via PDZ-binding motif) with NHERF4 (via the third PDZ domain); interaction leads to decreased expression of SLC26A3 on the cell membrane resulting in its reduced exchanger activity. In terms of processing, N-glycosylation is required for efficient cell surface expression, and protection from proteolytic degradation. Expressed in the colon. Expression is significantly decreased in adenomas (polyps) and adenocarcinomas of the colon.

It localises to the apical cell membrane. It is found in the membrane. The protein resides in the cell membrane. The enzyme catalyses hydrogencarbonate(in) + 2 chloride(out) = hydrogencarbonate(out) + 2 chloride(in). Its activity is regulated as follows. Inhibited by acidic pH. Mediates chloride-bicarbonate exchange with a chloride bicarbonate stoichiometry of 2:1 in the intestinal epithelia. Plays a role in the chloride and bicarbonate homeostasis during sperm epididymal maturation and capacitation. This Homo sapiens (Human) protein is Chloride anion exchanger (SLC26A3).